The sequence spans 1175 residues: Tyrosine-protein phosphatase non-receptor type 21 (1175 aa).

Residues 23-308 (LVARIQLLNN…ARHKFYRLNQ (286 aa)) form the FERM domain. Polar residues predominate over residues 395–421 (YSAHSTNSLNTPQPYLQPSPMSSNPSI). The tract at residues 395 to 445 (YSAHSTNSLNTPQPYLQPSPMSSNPSIPGSDVMRPDYIPSHRHSALIPPSY) is disordered. 10 positions are modified to phosphoserine: S577, S589, S590, S637, S673, S710, S711, S798, S800, and S805. The interval 663 to 702 (DVAPRTFSAGSQSSVFSDKVKQEGTEEQGSGGYSHKKSLS) is disordered. The Tyrosine-protein phosphatase domain occupies 897–1168 (VFTEYERILK…TFVYRVLIQF (272 aa)). Residues E1068, 1109–1115 (CSAGVGR), and Q1153 contribute to the substrate site. The active-site Phosphocysteine intermediate is C1109.

This sequence belongs to the protein-tyrosine phosphatase family. Non-receptor class subfamily. Particularly abundantly in adrenal glands.

It localises to the cytoplasm. The protein localises to the cytoskeleton. The enzyme catalyses O-phospho-L-tyrosyl-[protein] + H2O = L-tyrosyl-[protein] + phosphate. The sequence is that of Tyrosine-protein phosphatase non-receptor type 21 (Ptpn21) from Rattus norvegicus (Rat).